The chain runs to 690 residues: SWI/SNF-related matrix-associated actin-dependent regulator of chromatin subfamily A-like protein 1 homolog (690 aa).

Residues 30–49 (MQAAANATASTSSAAPPAPP) are disordered. The segment covering 31 to 44 (QAAANATASTSSAA) has biased composition (low complexity). Positions 92–170 (PTSLIKPTIG…AVKVELEPLP (79 aa)) constitute an HARP domain. The Helicase ATP-binding domain maps to 209-367 (IFALERDGRI…FTQIRLIDHK (159 aa)). 222–229 (DEMGLGKS) is an ATP binding site. The short motif at 316 to 319 (DESH) is the DESH box element. The Nuclear localization signal motif lies at 411-428 (RRLKADVLKDLPEKRREV). Residues 482–639 (ILENYFYPDA…TFRTADKMHL (158 aa)) form the Helicase C-terminal domain.

The protein belongs to the SNF2/RAD54 helicase family. SMARCAL1 subfamily.

The protein resides in the nucleus. It catalyses the reaction ATP + H2O = ADP + phosphate + H(+). ATP-dependent annealing helicase that catalyzes the rewinding of the stably unwound DNA. This chain is SWI/SNF-related matrix-associated actin-dependent regulator of chromatin subfamily A-like protein 1 homolog, found in Caenorhabditis elegans.